Consider the following 1022-residue polypeptide: Polyamine-modulated factor 1-binding protein 1 (1022 aa).

Coiled-coil stretches lie at residues 89–121 (NKQY…LQAS), 169–281 (EKLH…ACSN), 312–377 (SEDC…LREE), 411–732 (LKKD…SAIQ), and 758–968 (QDDL…KAGN). 2 stretches are compositionally biased toward basic and acidic residues: residues 545 to 556 (QKESSKIEEERK) and 571 to 582 (EGQRRLSNAEKE). The tract at residues 545 to 582 (QKESSKIEEERKHNRQRLQELSSELSEGQRRLSNAEKE) is disordered.

As to expression, expressed in the testis.

The protein resides in the cell projection. Its subcellular location is the cilium. The protein localises to the flagellum. In terms of biological role, required for normal spermatogenesis. It functions as a scaffold protein that attaches the sperm head-tail connecting piece to the nuclear envelope, thus maintaining sperm head and tail integrity. May also be involved in the general organization of cellular cytoskeleton. This is Polyamine-modulated factor 1-binding protein 1 (Pmfbp1) from Mus musculus (Mouse).